The primary structure comprises 35 residues: Anti-H(O) lectin 3 (35 aa).

This sequence belongs to the leguminous lectin family. In terms of assembly, homodimer. In terms of processing, highly glycosylated.

Binds lactose or galactose. The chain is Anti-H(O) lectin 3 from Ulex europaeus (Furze).